The primary structure comprises 228 residues: Phosphoribosylformylglycinamidine synthase subunit PurQ (228 aa).

The 224-residue stretch at 3–226 folds into the Glutamine amidotransferase type-1 domain; sequence FAVIVFPGSN…VNYWRETHVV (224 aa). The active-site Nucleophile is the Cys-86. Residues His-195 and Glu-197 contribute to the active site.

Part of the FGAM synthase complex composed of 1 PurL, 1 PurQ and 2 PurS subunits.

It localises to the cytoplasm. The enzyme catalyses N(2)-formyl-N(1)-(5-phospho-beta-D-ribosyl)glycinamide + L-glutamine + ATP + H2O = 2-formamido-N(1)-(5-O-phospho-beta-D-ribosyl)acetamidine + L-glutamate + ADP + phosphate + H(+). It carries out the reaction L-glutamine + H2O = L-glutamate + NH4(+). It participates in purine metabolism; IMP biosynthesis via de novo pathway; 5-amino-1-(5-phospho-D-ribosyl)imidazole from N(2)-formyl-N(1)-(5-phospho-D-ribosyl)glycinamide: step 1/2. Functionally, part of the phosphoribosylformylglycinamidine synthase complex involved in the purines biosynthetic pathway. Catalyzes the ATP-dependent conversion of formylglycinamide ribonucleotide (FGAR) and glutamine to yield formylglycinamidine ribonucleotide (FGAM) and glutamate. The FGAM synthase complex is composed of three subunits. PurQ produces an ammonia molecule by converting glutamine to glutamate. PurL transfers the ammonia molecule to FGAR to form FGAM in an ATP-dependent manner. PurS interacts with PurQ and PurL and is thought to assist in the transfer of the ammonia molecule from PurQ to PurL. In Geobacillus thermodenitrificans (strain NG80-2), this protein is Phosphoribosylformylglycinamidine synthase subunit PurQ.